Here is a 383-residue protein sequence, read N- to C-terminus: Glutamate 5-kinase (383 aa).

Lysine 17 provides a ligand contact to ATP. The substrate site is built by serine 64, aspartate 151, and asparagine 165. 185 to 186 (SD) is a binding site for ATP. The region spanning 291–367 (SGTIRVDAGA…DEIEGILGYN (77 aa)) is the PUA domain.

The protein belongs to the glutamate 5-kinase family.

It localises to the cytoplasm. It catalyses the reaction L-glutamate + ATP = L-glutamyl 5-phosphate + ADP. Its pathway is amino-acid biosynthesis; L-proline biosynthesis; L-glutamate 5-semialdehyde from L-glutamate: step 1/2. Catalyzes the transfer of a phosphate group to glutamate to form L-glutamate 5-phosphate. The polypeptide is Glutamate 5-kinase (Methanosarcina barkeri (strain Fusaro / DSM 804)).